We begin with the raw amino-acid sequence, 383 residues long: tRNA-specific 2-thiouridylase MnmA (383 aa).

ATP contacts are provided by residues 9-16 (GMSGGVDS) and Met-35. An interaction with target base in tRNA region spans residues 95–97 (NPD). Cys-100 (nucleophile) is an active-site residue. Cys-100 and Cys-196 are joined by a disulfide. Position 124 (Gly-124) interacts with ATP. The tract at residues 146–148 (KDQ) is interaction with tRNA. Cys-196 acts as the Cysteine persulfide intermediate in catalysis. Residues 308-309 (RY) form an interaction with tRNA region.

This sequence belongs to the MnmA/TRMU family.

Its subcellular location is the cytoplasm. The enzyme catalyses S-sulfanyl-L-cysteinyl-[protein] + uridine(34) in tRNA + AH2 + ATP = 2-thiouridine(34) in tRNA + L-cysteinyl-[protein] + A + AMP + diphosphate + H(+). In terms of biological role, catalyzes the 2-thiolation of uridine at the wobble position (U34) of tRNA, leading to the formation of s(2)U34. The chain is tRNA-specific 2-thiouridylase MnmA from Burkholderia pseudomallei (strain 668).